The chain runs to 204 residues: Large ribosomal subunit protein uL4 (204 aa).

The disordered stretch occupies residues 53–77 (ISDVSGTTAKPYSQKRTGRARQGSL). Positions 56 to 67 (VSGTTAKPYSQK) are enriched in polar residues.

Belongs to the universal ribosomal protein uL4 family. As to quaternary structure, part of the 50S ribosomal subunit.

Functionally, one of the primary rRNA binding proteins, this protein initially binds near the 5'-end of the 23S rRNA. It is important during the early stages of 50S assembly. It makes multiple contacts with different domains of the 23S rRNA in the assembled 50S subunit and ribosome. Forms part of the polypeptide exit tunnel. This Wolbachia sp. subsp. Brugia malayi (strain TRS) protein is Large ribosomal subunit protein uL4.